We begin with the raw amino-acid sequence, 459 residues long: Spermatogenesis-associated protein 1 (459 aa).

Residues Leu193 to Gly205 show a composition bias toward basic and acidic residues. The interval Leu193–Ser213 is disordered. 2 coiled-coil regions span residues Thr287 to Leu374 and Leu400 to Ile453.

In terms of assembly, interacts with IFT20.

It localises to the cytoplasmic vesicle. The protein resides in the secretory vesicle. Its subcellular location is the acrosome. This chain is Spermatogenesis-associated protein 1 (SPATA1), found in Homo sapiens (Human).